Here is a 344-residue protein sequence, read N- to C-terminus: Heat-inducible transcription repressor HrcA (344 aa).

The protein belongs to the HrcA family.

Its function is as follows. Negative regulator of class I heat shock genes (grpE-dnaK-dnaJ and groELS operons). Prevents heat-shock induction of these operons. The chain is Heat-inducible transcription repressor HrcA from Anoxybacillus flavithermus (strain DSM 21510 / WK1).